Consider the following 761-residue polypeptide: Hyperosmolality-gated Ca2+ permeable channel 1.6 (761 aa).

10 helical membrane passes run 7–27 (IGVA…AFAI), 101–121 (IYLL…TTMV), 156–176 (PRFW…CFIL), 375–395 (LIVG…IAFV), 419–439 (LLKS…FLLF), 467–487 (FYMF…TAFQ), 512–532 (ATFF…GEIL), 583–603 (AAVS…AFVV), 630–650 (VVTA…TKHA), and 653–673 (STPL…HCKN). The span at 718 to 731 (RVGEDPEPEEKLES) shows a compositional bias: basic and acidic residues. Residues 718 to 761 (RVGEDPEPEEKLESDMSPPDLVATKRWSWRNTPLPSKDSCREIP) form a disordered region.

The protein belongs to the CSC1 (TC 1.A.17) family.

Its subcellular location is the membrane. Acts as an osmosensitive calcium-permeable cation channel. The chain is Hyperosmolality-gated Ca2+ permeable channel 1.6 from Arabidopsis thaliana (Mouse-ear cress).